Consider the following 89-residue polypeptide: DNA/RNA-binding protein Alba 2 (89 aa).

An N6-acetyllysine modification is found at Lys-12. Residues Lys-14, Asp-18, and Asp-22 each contribute to the Zn(2+) site.

It belongs to the histone-like Alba family. In terms of assembly, forms homodimers and homotetramers. Homodimer at pH below 6.0. Forms homotetramers and higher order homooligomers at near the growth temperature of 80 degrees Celsius and pH 7.0. Interacts with Alba 1; heterodimers lack cooperative DNA-binding behavior and result in more compact chromatin structures compared to Alba 1 homodimers. Post-translationally, acetylated. Acetylation at Lys-12 decreases DNA-binding affinity.

The protein localises to the cytoplasm. It is found in the chromosome. In terms of biological role, binds single-stranded DNA, RNA and double-stranded DNA. Involved in DNA compaction. The chain is DNA/RNA-binding protein Alba 2 from Saccharolobus solfataricus (strain ATCC 35092 / DSM 1617 / JCM 11322 / P2) (Sulfolobus solfataricus).